Consider the following 355-residue polypeptide: Chemerin-like receptor 2 (355 aa).

Topologically, residues 1–41 (MEDLEETLFEEFENYSYALDYYSLESDLEEKVQLGVVHWVS) are extracellular. An N-linked (GlcNAc...) asparagine glycan is attached at N14. Residues 42–62 (LVLYCLSFVLGIPGNAIVIWF) form a helical membrane-spanning segment. The Cytoplasmic segment spans residues 63–73 (TGFKWKKTVST). The helical transmembrane segment at 74-94 (LWFLNLAIADFIFLLFLPLYI) threads the bilayer. The Extracellular segment spans residues 95–112 (SYVVMNFHWPFGIWLCKA). A disulfide bond links C110 and C187. The helical transmembrane segment at 113 to 133 (NSFTAQLNMFASVFFLTVISL) threads the bilayer. Over 134-154 (DHYIHLIHPVLSHRHRTLKNS) the chain is Cytoplasmic. A helical membrane pass occupies residues 155–175 (LIVIIFIWLLASLIGGPALYF). The Extracellular segment spans residues 176–210 (RDTVEFNNHTLCYNNFQKHDPDLTVIRHHVLTWVK). Residues 211–231 (FIVGYLFPLLTMSICYLCLIF) form a helical membrane-spanning segment. Residues 232 to 247 (KVKKRSILISSRHFWT) are Cytoplasmic-facing. A helical transmembrane segment spans residues 248–268 (ILAVVVAFVVCWTPYHLFSIW). Over 269 to 286 (ELTIHHNSYSHHVMQAGI) the chain is Extracellular. A helical transmembrane segment spans residues 287 to 307 (PLSTGLAFLNSCLNPILYVLI). Topologically, residues 308–355 (SKKFQARFRSSVAEILKYTLWEVSCSGTVSEQLRNSETKNLCLLETAQ) are cytoplasmic.

This sequence belongs to the chemokine-like receptor (CMKLR) family.

It localises to the cell membrane. In terms of biological role, receptor for chemoattractant adipokine chemerin/RARRES2 suggesting a role for this receptor in the regulation of inflammation and energy homesotasis. Signals mainly via beta-arrestin pathway. Binding of RARRES2 activates weakly G proteins, calcium mobilization and MAPK1/MAPK3 (ERK1/2) phosphorylation too. Acts also as a receptor for TAFA1, mediates its effects on neuronal stem-cell proliferation and differentiation via the activation of ROCK/ERK and ROCK/STAT3 signaling pathway. This chain is Chemerin-like receptor 2 (CMKLR2), found in Macaca mulatta (Rhesus macaque).